The sequence spans 447 residues: Phosphoglucosamine mutase (447 aa).

Residue serine 102 is the Phosphoserine intermediate of the active site. Positions 102, 241, 243, and 245 each coordinate Mg(2+). Phosphoserine is present on serine 102.

It belongs to the phosphohexose mutase family. Mg(2+) is required as a cofactor. Activated by phosphorylation.

It catalyses the reaction alpha-D-glucosamine 1-phosphate = D-glucosamine 6-phosphate. In terms of biological role, catalyzes the conversion of glucosamine-6-phosphate to glucosamine-1-phosphate. In Delftia acidovorans (strain DSM 14801 / SPH-1), this protein is Phosphoglucosamine mutase.